Here is a 211-residue protein sequence, read N- to C-terminus: Interleukin-6 (211 aa).

Residues 1–24 form the signal peptide; that stretch reads MKFLSARDFHPVAFLGLMLVTTTA. 2 disulfide bridges follow: Cys70–Cys76 and Cys99–Cys109.

The protein belongs to the IL-6 superfamily. Component of a hexamer of two molecules each of IL6, IL6R and IL6ST; first binds to IL6R to associate with the signaling subunit IL6ST. Interacts with IL6R (via the N-terminal ectodomain); this interaction may be affected by IL6R-binding with SORL1, hence decreasing IL6 cis signaling. Interacts with SORL1 (via the N-terminal ectodomain); this interaction leads to IL6 internalization and lysosomal degradation. May form a trimeric complex with the soluble SORL1 ectodomain and soluble IL6R receptor; this interaction might stabilize circulating IL6, hence promoting IL6 trans signaling. N- and O-glycosylated. Expressed by dendritic cells and macrophages. Expressed by activated follicular B cells. Abundantly expressed in the central nervous system (CNS), particularly the hypothalamic region.

It localises to the secreted. Cytokine with a wide variety of biological functions in immunity, tissue regeneration, and metabolism. Binds to IL6R, then the complex associates to the signaling subunit IL6ST/gp130 to trigger the intracellular IL6-signaling pathway. The interaction with the membrane-bound IL6R and IL6ST stimulates 'classic signaling', whereas the binding of IL6 and soluble IL6R to IL6ST stimulates 'trans-signaling'. Alternatively, 'cluster signaling' occurs when membrane-bound IL6:IL6R complexes on transmitter cells activate IL6ST receptors on neighboring receiver cells. Functionally, IL6 is a potent inducer of the acute phase response. Rapid production of IL6 contributes to host defense during infection and tissue injury, but excessive IL6 synthesis is involved in disease pathology. In the innate immune response, is synthesized by myeloid cells, such as macrophages and dendritic cells, upon recognition of pathogens through toll-like receptors (TLRs) at the site of infection or tissue injury. In the adaptive immune response, is required for the differentiation of B-cells into immunoglolin-secreting cells. Plays a major role in the differentiation of CD4(+) T cell subsets. Essential factor for the development of T follicular helper (Tfh) cells that are required for the induction of germinal-center formation. Together with IL21, controls the early generation of Tfh cells and are critical for an effective antibody response to acute viral infection. Required to drive naive CD4(+) T cells to the Th17 lineage, through 'cluster signaling' by dendritic cells. Also required for proliferation of myeloma cells and the survival of plasmablast cells. In terms of biological role, acts as an essential factor in bone homeostasis and on vessels directly or indirectly by induction of VEGF, resulting in increased angiogenesis activity and vascular permeability. Induces, through 'trans-signaling' and synergistically with IL1B and TNF, the production of VEGF. Involved in metabolic controls, is discharged into the bloodstream after muscle contraction increasing lipolysis and improving insulin resistance. 'Trans-signaling' in central nervous system regulates energy and glucose homeostasis. Mediates, through GLP-1, crosstalk between insulin-sensitive tissues, intestinal L cells and pancreatic islets to adapt to changes in insulin demand. Also acts as a myokine. Plays a protective role during liver injury, being required for maintenance of tissue regeneration. Also has a pivotal role in iron metabolism by regulating HAMP/hepcidin expression upon inflammation or bacterial infection. Through activation of IL6ST-YAP-NOTCH pathway, induces inflammation-induced epithelial regeneration. The sequence is that of Interleukin-6 from Mus musculus (Mouse).